The primary structure comprises 430 residues: Adenylosuccinate synthetase (430 aa).

Residues 12-18 (GDEGKGK) and 40-42 (GHT) each bind GTP. The Proton acceptor role is filled by Asp-13. Mg(2+) contacts are provided by Asp-13 and Gly-40. Residues 13–16 (DEGK), 38–41 (NAGH), Thr-130, Arg-144, Gln-224, Thr-239, and Arg-303 each bind IMP. Catalysis depends on His-41, which acts as the Proton donor. 299–305 (TVTGRKR) contributes to the substrate binding site. Residues Arg-305, 331-333 (KLD), and 413-415 (STS) each bind GTP.

Belongs to the adenylosuccinate synthetase family. Homodimer. Requires Mg(2+) as cofactor.

Its subcellular location is the cytoplasm. The enzyme catalyses IMP + L-aspartate + GTP = N(6)-(1,2-dicarboxyethyl)-AMP + GDP + phosphate + 2 H(+). Its pathway is purine metabolism; AMP biosynthesis via de novo pathway; AMP from IMP: step 1/2. Its function is as follows. Plays an important role in the de novo pathway of purine nucleotide biosynthesis. Catalyzes the first committed step in the biosynthesis of AMP from IMP. This is Adenylosuccinate synthetase from Cereibacter sphaeroides (strain ATCC 17029 / ATH 2.4.9) (Rhodobacter sphaeroides).